A 76-amino-acid polypeptide reads, in one-letter code: uncharacterized protein (76 aa).

Its subcellular location is the plastid. This is an uncharacterized protein from Euglena longa (Euglenophycean alga).